The chain runs to 572 residues: Phosphoenolpyruvate-protein phosphotransferase (572 aa).

Histidine 191 (tele-phosphohistidine intermediate) is an active-site residue. Positions 298 and 334 each coordinate phosphoenolpyruvate. Mg(2+) is bound by residues glutamate 433 and aspartate 457. Residues 456 to 457 (ND) and arginine 467 each bind phosphoenolpyruvate. Cysteine 504 (proton donor) is an active-site residue.

The protein belongs to the PEP-utilizing enzyme family. In terms of assembly, homodimer. It depends on Mg(2+) as a cofactor.

It is found in the cytoplasm. The enzyme catalyses L-histidyl-[protein] + phosphoenolpyruvate = N(pros)-phospho-L-histidyl-[protein] + pyruvate. In terms of biological role, general (non sugar-specific) component of the phosphoenolpyruvate-dependent sugar phosphotransferase system (sugar PTS). This major carbohydrate active-transport system catalyzes the phosphorylation of incoming sugar substrates concomitantly with their translocation across the cell membrane. Enzyme I transfers the phosphoryl group from phosphoenolpyruvate (PEP) to the phosphoryl carrier protein (HPr). The sequence is that of Phosphoenolpyruvate-protein phosphotransferase (ptsI) from Staphylococcus aureus (strain MRSA252).